We begin with the raw amino-acid sequence, 103 residues long: Protein S100-A16 (103 aa).

Residues 12–47 (VIVLVENFYKYVSKYSLVKNKISKSSFREMLQKELN) enclose the EF-hand 1; degenerate domain. The region spanning 54 to 89 (GNRKAADKLIQNLDANHDGRISFDEYWTLIGGITGP) is the EF-hand 2 domain. 5 residues coordinate Ca(2+): Asp67, Asn69, Asp71, Arg73, and Glu78.

It belongs to the S-100 family. Homodimer. Interacts with TP53. Ubiquitous. Highly expressed in esophagus, adipose tissues and colon. Expressed at lower level in lung, brain, pancreas and skeletal muscle. Expression is up-regulated in tumors of bladder, lung, thyroid gland, pancreas and ovary. Expressed in astrocytes.

The protein localises to the nucleus. It is found in the nucleolus. It localises to the cytoplasm. Calcium-binding protein. Binds one calcium ion per monomer. Can promote differentiation of adipocytes (in vitro). Overexpression in preadipocytes increases their proliferation, enhances adipogenesis and reduces insulin-stimulated glucose uptake. The sequence is that of Protein S100-A16 from Homo sapiens (Human).